The primary structure comprises 605 residues: Terpenoid synthase 18 (605 aa).

The Mg(2+) site is built by Asp-356, Asp-360, Asn-500, Thr-504, and Glu-508. The DDXXD motif signature appears at 356–360; sequence DDTYD.

This sequence belongs to the terpene synthase family. Tpsa subfamily. The cofactor is Mg(2+). Mn(2+) serves as cofactor. As to expression, predominantly expressed in flowers and siliques but also in roots and leaves.

Its subcellular location is the cytoplasm. The protein operates within secondary metabolite biosynthesis; terpenoid biosynthesis. The protein is Terpenoid synthase 18 (TPS18) of Arabidopsis thaliana (Mouse-ear cress).